The following is a 299-amino-acid chain: Pentalenolactone F synthase (299 aa).

2 residues coordinate Fe cation: His105 and Asp107. Residues Thr133 and Trp251 each contribute to the 2-oxoglutarate site. His266 contacts Fe cation. Arg277 serves as a coordination point for 2-oxoglutarate.

It belongs to the TfdA dioxygenase family. Fe(2+) is required as a cofactor.

It catalyses the reaction pentalenolactone D + 2 2-oxoglutarate + 2 O2 = pentalenolactone F + 2 succinate + 2 CO2 + H2O. It functions in the pathway antibiotic biosynthesis; pentalenolactone biosynthesis. Its activity is regulated as follows. Activated by ascorbate. Catalyzes the Fe(2+) and alpha-ketoglutarate-dependent oxidation of pentalenolactone D to pentalenolactone F in the biosynthesis of pentalenolactone antibiotic. Also able to catalyze the oxidation of pentalenolactone D to pentalenolactone E. This is Pentalenolactone F synthase (pntD) from Streptomyces arenae.